The chain runs to 149 residues: Calmodulin (149 aa).

Ala2 bears the N-acetylalanine mark. 4 consecutive EF-hand domains span residues 8–43 (EQIA…LGQN), 44–79 (PTEA…KMKD), 81–116 (DSEE…LGEK), and 117–149 (LTDE…MMAK). Positions 21, 23, 25, 27, 32, 57, 59, 61, 63, 68, 94, 96, 98, 100, and 105 each coordinate Ca(2+). Residue Lys116 is modified to N6,N6,N6-trimethyllysine. 5 residues coordinate Ca(2+): Asp130, Asp132, Asp134, Gln136, and Glu141.

The protein belongs to the calmodulin family.

Its function is as follows. Calmodulin mediates the control of a large number of enzymes, ion channels and other proteins by Ca(2+). Among the enzymes to be stimulated by the calmodulin-Ca(2+) complex are a number of protein kinases and phosphatases. The chain is Calmodulin from Mougeotia scalaris (Green alga).